The primary structure comprises 122 residues: Large ribosomal subunit protein uL14 (122 aa).

This sequence belongs to the universal ribosomal protein uL14 family. In terms of assembly, part of the 50S ribosomal subunit. Forms a cluster with proteins L3 and L19. In the 70S ribosome, L14 and L19 interact and together make contacts with the 16S rRNA in bridges B5 and B8.

In terms of biological role, binds to 23S rRNA. Forms part of two intersubunit bridges in the 70S ribosome. The chain is Large ribosomal subunit protein uL14 from Wolinella succinogenes (strain ATCC 29543 / DSM 1740 / CCUG 13145 / JCM 31913 / LMG 7466 / NCTC 11488 / FDC 602W) (Vibrio succinogenes).